The chain runs to 431 residues: Putative serine/threonine-protein kinase B (431 aa).

A Protein kinase domain is found at 20–279 (YLNKGIVGLG…VRENFQIPYI (260 aa)). ATP is bound by residues 26 to 34 (VGLGSYGEG) and Lys49. The active-site Proton acceptor is the Asp147. In terms of domain architecture, PH spans 331-429 (DVTHRGHVNK…WVHAIQRGIG (99 aa)).

Belongs to the protein kinase superfamily. Ser/Thr protein kinase family.

The enzyme catalyses L-seryl-[protein] + ATP = O-phospho-L-seryl-[protein] + ADP + H(+). It carries out the reaction L-threonyl-[protein] + ATP = O-phospho-L-threonyl-[protein] + ADP + H(+). In Trypanosoma brucei brucei, this protein is Putative serine/threonine-protein kinase B (NRKB).